The chain runs to 221 residues: D-glycero-alpha-D-manno-heptose 1-phosphate guanylyltransferase (221 aa).

It belongs to the D-alpha-D-heptose-1-P guanylyltransferase family.

It catalyses the reaction D-glycero-alpha-D-manno-heptose 1-phosphate + GTP + H(+) = GDP-D-glycero-alpha-D-manno-heptose + diphosphate. It participates in nucleotide-sugar biosynthesis; GDP-D-glycero-alpha-D-manno-heptose biosynthesis; GDP-D-glycero-alpha-D-manno-heptose from D-glycero-alpha-D-manno-heptose 7-phosphate: step 3/3. Its pathway is capsule biogenesis; capsule polysaccharide biosynthesis. Catalyzes the GDP transfer from GTP to D-glycero-alpha-D-manno-heptose 1-phosphate, yielding GDP-D-alpha-D-heptose. Is able to use ATP, CTP or UTP as substrate in the presence of pyrophosphatase, but at a significantly slower rate. Can also form GDP-alpha-D-mannose from alpha-D-mannose 1-phosphate and GTP. In Campylobacter jejuni subsp. jejuni serotype O:2 (strain ATCC 700819 / NCTC 11168), this protein is D-glycero-alpha-D-manno-heptose 1-phosphate guanylyltransferase.